Reading from the N-terminus, the 240-residue chain is MNAIAIIAASGIGKRMQLPGGRSKQLLEIGGFPVIHHTLKAFEDASQVTEVYIATKADNIDLLQDMARSAGFRKVRHVIEGGKERQDSVWNCIRMISDGHSGAGELPDAILVHDGARPFIRPEEIDDIVRLSVESGACVPGNRPKDTIKYIGSDPSCFGATLERSRLMQVQTPQGFRAGMLIDAHHRAAEEGWYATDDAALVERYFPDYPVRIYETGYHNIKITTPEDIPVAEAIYQALL.

This sequence belongs to the IspD/TarI cytidylyltransferase family. IspD subfamily.

It catalyses the reaction 2-C-methyl-D-erythritol 4-phosphate + CTP + H(+) = 4-CDP-2-C-methyl-D-erythritol + diphosphate. It functions in the pathway isoprenoid biosynthesis; isopentenyl diphosphate biosynthesis via DXP pathway; isopentenyl diphosphate from 1-deoxy-D-xylulose 5-phosphate: step 2/6. Its function is as follows. Catalyzes the formation of 4-diphosphocytidyl-2-C-methyl-D-erythritol from CTP and 2-C-methyl-D-erythritol 4-phosphate (MEP). This chain is 2-C-methyl-D-erythritol 4-phosphate cytidylyltransferase, found in Chlorobium luteolum (strain DSM 273 / BCRC 81028 / 2530) (Pelodictyon luteolum).